The chain runs to 173 residues: MMTKSNTKKSDKDLWATPWWVFHYAEQYFNIKFDLDTCAMEHNTKVKNFITPEQNTLTADWQGRYCWMNPPYSNPLPFVLRAISQSVLHNKTVVMLLNVDGSTKWFDMCVRNAKEIVYITNSRIPFINNETGEETDQNNKPQMLVLFEPKAPYGSLKSSYVSLHEMKEKGMLQ.

It belongs to the N(4)/N(6)-methyltransferase family.

The enzyme catalyses a 2'-deoxyadenosine in DNA + S-adenosyl-L-methionine = an N(6)-methyl-2'-deoxyadenosine in DNA + S-adenosyl-L-homocysteine + H(+). Methyltransferase that methylates adenine residues in the ssDNA and dsDNA sequence 5'-GATC-3'. May prevent degradation of viral DNA by the host restriction-modification antiviral defense system. The sequence is that of DNA N-6-adenine-methyltransferase from Haemophilus influenzae (Bacteriophage HP1).